A 297-amino-acid polypeptide reads, in one-letter code: Leucine-rich repeat-containing protein 25 (297 aa).

Residues 1-25 (MGSIRTRLLWLCLLMLLALLHKSGS) form the signal peptide. At 26-169 (QDLTCMVHPS…SCPPSWGPGT (144 aa)) the chain is on the extracellular side. 2 N-linked (GlcNAc...) asparagine glycosylation sites follow: N44 and N49. LRR repeat units lie at residues 66-89 (HAQV…DKLE) and 90-113 (KLQT…LRCD). 2 N-linked (GlcNAc...) asparagine glycosylation sites follow: N133 and N152. The helical transmembrane segment at 170-190 (IGALVAGTISLAVAVSGSVLA) threads the bilayer. Topologically, residues 191–297 (WRLLRRRRRA…VYCNLESLGR (107 aa)) are cytoplasmic. Positions 202–244 (EHSLSKAQMSPHDIPKPVTDFLPRYSSRRPGPKAPDSPPSRFT) are disordered. Phosphoserine is present on residues S211, S238, and S267. Y289 is modified (phosphotyrosine).

As to quaternary structure, interacts with RIGI. Interacts with SQSTM1. Interacts with p65/RELA; this interaction promotes the degradation of RELA through autophagy.

Its subcellular location is the membrane. The protein localises to the cytoplasm. Functionally, plays a role in the inhibition of RLR-mediated type I interferon signaling pathway by targeting RIGI for autophagic degradation. Interacts specifically with ISG15-associated RIGI to promote interaction between RIGI and the autophagic cargo receptor p62/SQSTM1 to mediate RIGI degradation via selective autophagy. Plays also a role in the inhibition of NF-kappa-B signaling pathway and inflammatory response by promoting the degradation of p65/RELA. The chain is Leucine-rich repeat-containing protein 25 (Lrrc25) from Mus musculus (Mouse).